The primary structure comprises 256 residues: Diacetyl reductase [(S)-acetoin forming] (256 aa).

Residues Leu6 to Asp33 and Asp59 contribute to the NAD(+) site. Ser139 contributes to the substrate binding site. Tyr152 serves as the catalytic Proton acceptor. Residue Lys156 participates in NAD(+) binding.

This sequence belongs to the short-chain dehydrogenases/reductases (SDR) family. Homotetramer.

The catalysed reaction is (S)-acetoin + NAD(+) = diacetyl + NADH + H(+). In terms of biological role, catalyzes the reversible reduction of (S)-acetoin to 2,3-butanediol in the presence of NADH. The protein is Diacetyl reductase [(S)-acetoin forming] (budC) of Klebsiella pneumoniae.